A 512-amino-acid polypeptide reads, in one-letter code: uncharacterized protein (512 aa).

An N-terminal signal peptide occupies residues 1–22 (MVSSLIYSLCAVSGLLATTVNG). The N-linked (GlcNAc...) asparagine glycan is linked to Asn-167. The disordered stretch occupies residues 251–282 (SAASPPIYEPDRQTDPEDPETGRNNNQGFEGL).

The protein resides in the secreted. This is an uncharacterized protein from Arthroderma benhamiae (strain ATCC MYA-4681 / CBS 112371) (Trichophyton mentagrophytes).